We begin with the raw amino-acid sequence, 428 residues long: Serine--tRNA ligase (428 aa).

Residue 231–233 (TAE) coordinates L-serine. 262 to 264 (RAE) lines the ATP pocket. Residue E285 participates in L-serine binding. 349-352 (EISS) contacts ATP. Residue S385 coordinates L-serine.

This sequence belongs to the class-II aminoacyl-tRNA synthetase family. Type-1 seryl-tRNA synthetase subfamily. As to quaternary structure, homodimer. The tRNA molecule binds across the dimer.

It localises to the cytoplasm. The catalysed reaction is tRNA(Ser) + L-serine + ATP = L-seryl-tRNA(Ser) + AMP + diphosphate + H(+). It carries out the reaction tRNA(Sec) + L-serine + ATP = L-seryl-tRNA(Sec) + AMP + diphosphate + H(+). Its pathway is aminoacyl-tRNA biosynthesis; selenocysteinyl-tRNA(Sec) biosynthesis; L-seryl-tRNA(Sec) from L-serine and tRNA(Sec): step 1/1. Catalyzes the attachment of serine to tRNA(Ser). Is also able to aminoacylate tRNA(Sec) with serine, to form the misacylated tRNA L-seryl-tRNA(Sec), which will be further converted into selenocysteinyl-tRNA(Sec). The protein is Serine--tRNA ligase of Methylorubrum extorquens (strain CM4 / NCIMB 13688) (Methylobacterium extorquens).